The primary structure comprises 279 residues: Acetyl-coenzyme A carboxylase carboxyl transferase subunit beta (279 aa).

One can recognise a CoA carboxyltransferase N-terminal domain in the interval leucine 23–serine 279. Positions 27, 30, 46, and 49 each coordinate Zn(2+). The C4-type zinc finger occupies cysteine 27–cysteine 49.

The protein belongs to the AccD/PCCB family. In terms of assembly, acetyl-CoA carboxylase is a heterohexamer composed of biotin carboxyl carrier protein (AccB), biotin carboxylase (AccC) and two subunits each of ACCase subunit alpha (AccA) and ACCase subunit beta (AccD). Requires Zn(2+) as cofactor.

Its subcellular location is the cytoplasm. The catalysed reaction is N(6)-carboxybiotinyl-L-lysyl-[protein] + acetyl-CoA = N(6)-biotinyl-L-lysyl-[protein] + malonyl-CoA. The protein operates within lipid metabolism; malonyl-CoA biosynthesis; malonyl-CoA from acetyl-CoA: step 1/1. In terms of biological role, component of the acetyl coenzyme A carboxylase (ACC) complex. Biotin carboxylase (BC) catalyzes the carboxylation of biotin on its carrier protein (BCCP) and then the CO(2) group is transferred by the transcarboxylase to acetyl-CoA to form malonyl-CoA. The chain is Acetyl-coenzyme A carboxylase carboxyl transferase subunit beta from Prosthecochloris aestuarii (strain DSM 271 / SK 413).